A 416-amino-acid chain; its full sequence is Phosphatidylinositol 5-phosphate 4-kinase type-2 beta (416 aa).

Residue serine 2 is modified to N-acetylserine. At threonine 8 the chain carries Phosphothreonine. At serine 19 the chain carries Phosphoserine. The PIPK domain maps to 38 to 415 (ASEPILSVLM…RFNEFMSNIL (378 aa)). The tract at residues 64–70 (VMLMPDD) is required for interaction with PIP5K1A. Residues lysine 94 and lysine 150 each carry the N6-acetyllysine modification. Residues 202 to 204 (RNV) and lysine 214 contribute to the ATP site. GTP is bound by residues 203-204 (NV) and lysine 214. At threonine 322 the chain carries Phosphothreonine. Serine 326 is modified (phosphoserine). Aspartate 369 contributes to the GTP binding site.

In terms of assembly, homodimer. Binds TNFRSF1A. Interacts with PIP4K2A; the interaction suppresses ubiquitination by the SPOP/CUL3 complex. Probably interacts with PIP5K1A; the interaction inhibits PIP5K1A kinase activity. Post-translationally, ubiquitinated by the SPOP/CUL3 complex. Ubiquitination is stimulated by PtdIns5P levels. In terms of processing, phosphorylated on serine residues.

The protein localises to the endoplasmic reticulum membrane. The protein resides in the cell membrane. It is found in the nucleus. Its subcellular location is the cytoplasm. It catalyses the reaction a 1,2-diacyl-sn-glycero-3-phospho-(1D-myo-inositol-5-phosphate) + ATP = a 1,2-diacyl-sn-glycero-3-phospho-(1D-myo-inositol-4,5-bisphosphate) + ADP + H(+). The catalysed reaction is 1,2-dihexadecanoyl-sn-glycero-3-phospho-(1D-myo-inositol-5-phosphate) + ATP = 1,2-dihexadecanoyl-sn-glycero-3-phospho-(1D-myo-inositol-4,5-bisphosphate) + ADP + H(+). It carries out the reaction 1,2-dihexadecanoyl-sn-glycero-3-phospho-(1D-myo-inositol-5-phosphate) + GTP = 1,2-dihexadecanoyl-sn-glycero-3-phospho-(1D-myo-inositol-4,5-bisphosphate) + GDP + H(+). In terms of biological role, participates in the biosynthesis of phosphatidylinositol 4,5-bisphosphate. Preferentially utilizes GTP, rather than ATP, for PI(5)P phosphorylation and its activity reflects changes in direct proportion to the physiological GTP concentration. Its GTP-sensing activity is critical for metabolic adaptation. In collaboration with PIP4K2A, has a role in mediating autophagy in times of nutrient stress. Required for autophagosome-lysosome fusion and the regulation of cellular lipid metabolism. PIP4Ks negatively regulate insulin signaling through a catalytic-independent mechanism. They interact with PIP5Ks and suppress PIP5K-mediated PtdIns(4,5)P2 synthesis and insulin-dependent conversion to PtdIns(3,4,5)P3. This Mus musculus (Mouse) protein is Phosphatidylinositol 5-phosphate 4-kinase type-2 beta.